We begin with the raw amino-acid sequence, 215 residues long: Ras-related protein Rab-5B (215 aa).

Residues serine 29, alanine 30, glycine 32, lysine 33, serine 34, serine 35, histidine 46, glutamate 47, threonine 52, glycine 78, asparagine 133, lysine 134, aspartate 136, alanine 164, and lysine 165 each contribute to the GTP site. Position 34 (serine 34) interacts with Mg(2+). 2 consecutive short sequence motifs (switch) follow at residues 44 to 56 and 77 to 93; these read QFHEYQESTIGAA and AGQERYHSLAPMYYRGA. Threonine 52 is a Mg(2+) binding site. Residues 184-215 are disordered; that stretch reads SEPQSTSGAAGRSRGVDLHEQTQQNKSQCCSN. The segment covering 204-215 has biased composition (polar residues); the sequence is QTQQNKSQCCSN. 2 S-geranylgeranyl cysteine lipidation sites follow: cysteine 212 and cysteine 213.

The protein belongs to the small GTPase superfamily. Rab family. Mg(2+) is required as a cofactor.

It is found in the cell membrane. The protein localises to the early endosome membrane. The enzyme catalyses GTP + H2O = GDP + phosphate + H(+). Its activity is regulated as follows. Regulated by guanine nucleotide exchange factors (GEFs) which promote the exchange of bound GDP for free GTP. Regulated by GTPase activating proteins (GAPs) which increase the GTP hydrolysis activity. Inhibited by GDP dissociation inhibitors (GDIs). The small GTPases Rab are key regulators of intracellular membrane trafficking, from the formation of transport vesicles to their fusion with membranes. Rabs cycle between an inactive GDP-bound form and an active GTP-bound form that is able to recruit to membranes different sets of downstream effectors directly responsible for vesicle formation, movement, tethering and fusion. The polypeptide is Ras-related protein Rab-5B (RAB5B) (Gallus gallus (Chicken)).